A 132-amino-acid chain; its full sequence is ATP synthase epsilon chain (132 aa).

It belongs to the ATPase epsilon chain family. F-type ATPases have 2 components, CF(1) - the catalytic core - and CF(0) - the membrane proton channel. CF(1) has five subunits: alpha(3), beta(3), gamma(1), delta(1), epsilon(1). CF(0) has three main subunits: a, b and c.

It localises to the cell membrane. Produces ATP from ADP in the presence of a proton gradient across the membrane. In Brevibacillus brevis (strain 47 / JCM 6285 / NBRC 100599), this protein is ATP synthase epsilon chain.